The following is a 332-amino-acid chain: NADH-quinone oxidoreductase subunit H (332 aa).

Helical transmembrane passes span 8 to 28, 44 to 66, 78 to 98, 120 to 140, 157 to 177, 196 to 216, 245 to 265, 274 to 294, and 312 to 332; these read IIECILKIIVVLLIFSALAGF, IGPNYVGPYGLLQVVADGIKLFA, PIFILAPSIAAITAFIAMAPI, VGILFVLAVSSCGIYAPLLAG, IQFLSFEVITILSLLAPLMII, WLIFKQPLAFGLFIIAAYVEL, MFFIGEYANMFATAFILSLVF, FIPGGIAILLKVCFFIFLFMW, and WKIMLPLALLNVLITGCILLF.

It belongs to the complex I subunit 1 family. In terms of assembly, NDH-1 is composed of 14 different subunits. Subunits NuoA, H, J, K, L, M, N constitute the membrane sector of the complex.

It localises to the cell inner membrane. The catalysed reaction is a quinone + NADH + 5 H(+)(in) = a quinol + NAD(+) + 4 H(+)(out). In terms of biological role, NDH-1 shuttles electrons from NADH, via FMN and iron-sulfur (Fe-S) centers, to quinones in the respiratory chain. The immediate electron acceptor for the enzyme in this species is believed to be ubiquinone. Couples the redox reaction to proton translocation (for every two electrons transferred, four hydrogen ions are translocated across the cytoplasmic membrane), and thus conserves the redox energy in a proton gradient. This subunit may bind ubiquinone. This chain is NADH-quinone oxidoreductase subunit H, found in Helicobacter hepaticus (strain ATCC 51449 / 3B1).